Consider the following 522-residue polypeptide: Glutathione reductase, mitochondrial (522 aa).

A mitochondrion-targeting transit peptide spans 1 to 43 (MALLPRALSAGAGPSWRRAARAFRGFLLLLPEPAALTRALSRA). Positions 74 and 75 each coordinate FAD. Glutathione is bound at residue serine 74. Arginine 81 provides a ligand contact to glutathione. FAD is bound at residue glutamate 94. An N6-acetyllysine modification is found at lysine 97. The FAD site is built by threonine 101, cysteine 102, and lysine 110. Cysteine 102 and cysteine 107 are disulfide-bonded. Tyrosine 158 is a binding site for glutathione. Alanine 174 contacts FAD. Alanine 239, isoleucine 242, glutamate 245, arginine 262, arginine 268, and glycine 334 together coordinate NADP(+). Aspartate 375 is a binding site for FAD. Leucine 381 is a binding site for NADP(+). Threonine 383 contacts FAD. Arginine 391 contacts glutathione. An NADP(+)-binding site is contributed by valine 414. Histidine 511 contacts FAD. Catalysis depends on histidine 511, which acts as the Proton acceptor.

Belongs to the class-I pyridine nucleotide-disulfide oxidoreductase family. Homodimer; disulfide-linked. It depends on FAD as a cofactor.

The protein localises to the mitochondrion. Its subcellular location is the cytoplasm. It catalyses the reaction 2 glutathione + NADP(+) = glutathione disulfide + NADPH + H(+). Its function is as follows. Catalyzes the reduction of glutathione disulfide (GSSG) to reduced glutathione (GSH). Constitutes the major mechanism to maintain a high GSH:GSSG ratio in the cytosol. This chain is Glutathione reductase, mitochondrial (GSR), found in Homo sapiens (Human).